Here is a 338-residue protein sequence, read N- to C-terminus: Popeye domain-containing protein 1 (338 aa).

Residues 1–40 (MATESILITTLPMDLNSQINNVTFGLNENETLCENWREIH) lie on the Extracellular side of the membrane. N-linked (GlcNAc...) asparagine glycosylation is found at N21 and N29. The chain crosses the membrane as a helical span at residues 41–61 (HLVFHLANTCFAAGLVIPSTL). Topologically, residues 62–65 (NLHM) are cytoplasmic. A helical membrane pass occupies residues 66–86 (ILLRGMLCLGCIFFIIWAILF). The Extracellular segment spans residues 87–91 (RCALD). Residues 92 to 112 (IMIWNATFLSMNFMHFIYLVY) form a helical membrane-spanning segment. Residues 113–338 (KKRPIKIEKD…VGPLSHAVFC (226 aa)) are Cytoplasmic-facing.

This sequence belongs to the popeye family.

The protein localises to the lateral cell membrane. It localises to the cell junction. Its subcellular location is the tight junction. The protein resides in the membrane. It is found in the cell membrane. The protein localises to the sarcolemma. It localises to the caveola. Its function is as follows. Cell adhesion molecule involved in the establishment and/or maintenance of cell integrity. May play a role in vamp3-mediated vesicular transport and recycling of different receptor molecules. May be involved in the formation and regulation of the tight junction (TJ) paracellular permeability barrier in epithelial cells. May induce primordial adhesive contact and aggregation of epithelial cells in a Ca(2+)-independent manner. May be involved in epithelial movement during corneal sheet formation and regeneration. May play a role in the regulation of cell shape and movement by modulating the Rho-GTPase activity. May be involved in skeletal muscle and heart development as well as in the maintenance of heart function. May also be involved in striated muscle regeneration and in the regulation of cell spreading. In Xenopus tropicalis (Western clawed frog), this protein is Popeye domain-containing protein 1 (popdc1).